The primary structure comprises 198 residues: Ribosome maturation factor RimP (198 aa).

This sequence belongs to the RimP family.

The protein resides in the cytoplasm. Required for maturation of 30S ribosomal subunits. The polypeptide is Ribosome maturation factor RimP (Rhizobium etli (strain ATCC 51251 / DSM 11541 / JCM 21823 / NBRC 15573 / CFN 42)).